A 144-amino-acid polypeptide reads, in one-letter code: UPF0102 protein BMA2801 (144 aa).

Residues methionine 1–serine 28 are disordered.

It belongs to the UPF0102 family.

The polypeptide is UPF0102 protein BMA2801 (Burkholderia mallei (strain ATCC 23344)).